A 549-amino-acid polypeptide reads, in one-letter code: Exodeoxyribonuclease 7 large subunit (549 aa).

Residues 511 to 549 (LVATDPPVDPKPTRKPVQKSSSPKPSSRKPKKSQQEDLF) are disordered.

The protein belongs to the XseA family. In terms of assembly, heterooligomer composed of large and small subunits.

It localises to the cytoplasm. It catalyses the reaction Exonucleolytic cleavage in either 5'- to 3'- or 3'- to 5'-direction to yield nucleoside 5'-phosphates.. Functionally, bidirectionally degrades single-stranded DNA into large acid-insoluble oligonucleotides, which are then degraded further into small acid-soluble oligonucleotides. In Beijerinckia indica subsp. indica (strain ATCC 9039 / DSM 1715 / NCIMB 8712), this protein is Exodeoxyribonuclease 7 large subunit.